The chain runs to 456 residues: Phosphomethylpyrimidine synthase (456 aa).

Residues N80, M109, Y139, H175, 195–197 (SRG), 236–239 (DSLR), and E275 each bind substrate. H279 is a binding site for Zn(2+). Y302 is a substrate binding site. H343 provides a ligand contact to Zn(2+). Residues C423, C426, and C431 each coordinate [4Fe-4S] cluster.

This sequence belongs to the ThiC family. [4Fe-4S] cluster serves as cofactor.

It carries out the reaction 5-amino-1-(5-phospho-beta-D-ribosyl)imidazole + S-adenosyl-L-methionine = 4-amino-2-methyl-5-(phosphooxymethyl)pyrimidine + CO + 5'-deoxyadenosine + formate + L-methionine + 3 H(+). The protein operates within cofactor biosynthesis; thiamine diphosphate biosynthesis. Its function is as follows. Catalyzes the synthesis of the hydroxymethylpyrimidine phosphate (HMP-P) moiety of thiamine from aminoimidazole ribotide (AIR) in a radical S-adenosyl-L-methionine (SAM)-dependent reaction. The sequence is that of Phosphomethylpyrimidine synthase from Prochlorococcus marinus (strain MIT 9301).